A 277-amino-acid polypeptide reads, in one-letter code: Protein HEAT-INDUCED TAS1 TARGET 1 (277 aa).

It belongs to the heat induced plant HTT protein family. Interacts with the heat shock proteins HSP70-14 and At2g33735/HSP40, and with NFYC2 in both cytoplasm and nucleus. As to expression, expressed ubiquitously, including in seedlings, leaves, stems, inflorescences and siliques.

It localises to the cytoplasm. The protein localises to the nucleus. Functionally, mediates both basal and acquired thermotolerance via HSFA1s-directed pathways (e.g. HSFA1A, HSFA1B, and HSFA1D). Triggers the expression of HSFA1A and HSFA1B. This is Protein HEAT-INDUCED TAS1 TARGET 1 from Arabidopsis thaliana (Mouse-ear cress).